The sequence spans 302 residues: Nudix hydrolase 22, chloroplastic (302 aa).

The N-terminal 25 residues, 1-25, are a transit peptide targeting the chloroplast; sequence MKSGASAASPTAKSFNFGSSRLLAL. The Nudix hydrolase domain occupies 73–229; it reads PKKAAVLICL…DSDYVIWGLT (157 aa). Residues 114–135 carry the Nudix box motif; that stretch reads KAEEHDKDDGITATREAEEEIG. Residues glutamate 129 and glutamate 133 each coordinate Mg(2+).

This sequence belongs to the Nudix hydrolase family. It depends on Mg(2+) as a cofactor. Requires Mn(2+) as cofactor. Expressed in roots, leaves, stems and inflorescences.

It localises to the plastid. Its subcellular location is the chloroplast. Functionally, probably mediates the hydrolysis of some nucleoside diphosphate derivatives. The polypeptide is Nudix hydrolase 22, chloroplastic (NUDT22) (Arabidopsis thaliana (Mouse-ear cress)).